The chain runs to 1017 residues: MGNLTMSRRTFVKTAAITGAAAAAFGASTHTALAEETYSSVSGNDTVAVKTCCRGCGKMECGVKVIVQNGRAIRVEGDEGAFQSMGNCCTKSQSSIQAAYHPDRLHYPMKRTNPKGEEPGWQRISWDEAMQSIVDNFMDIKAKHGGEAIACQVGTSRIWCMHSESILKNMLETPNNVEAWQICKGPRHFATTMVSQFAMSWMETITRPKVYVQWGGASELSNYDDSCRTTVDVASRADVHISVDPRMANMGKEADYWQHLRPGTDGALALAWTNVIIEKKLYDELYVKKWTNAPFLVCEDMEPSGFPTVRTDGSYWDVKTALLKESDIKEGGSPYKFLVYDNNWEKLKAEGVEHEYGAFTWFNADQEGVIDETGGFWEGENYDSEKARQGREAAQDNLLPGQTQGWLPDPMPFDPAIDPALEGEFEITLKDGKTVKVKPVWEHYKARAAEYKPEVAAEITGIPASEIEAAATAYGTRIDPSTGYGNGGIQYMLAVEHFCSAIQNCSAFDNLVGITGNMDTPGGNRGPTIVPIDGDLQGFSAWAPGATTPPEEVNRKQIGIDKFPLLGWWQYWCDSHSLWDAVITGDPYPVRALWNESGNFMSQTNTTRAWEALCSLDFYVDLNLWHTPQNDTADIILPVAHWIELNSPRASQGSAGAMGATVKCVQPPAEAKYDPEIVMDLARRMNWKWTDEPGNEWPDINWQLDDSIKLLTDDELTYTTWHVENGKPTFERHGVPMAEVTPKYKTWDEYVKAFQEHGWWQAKDIEPRNWGTYRRYQTGAMRARDRVWGRLDYTAGKGIGDWKPGWFTPTMKQEIWSTVMESHHPDHPEWRLPTYTEPPHGPKDGDRIKEYPLTATTGRRIPVYFHSEHRQLPWCRELWPVPRVEINPKTAAEYGIEQGDWVWIETEWGKIREVADLYYGVKEDVINLEHTWWYPEVKDAGHGWQFSQVNQLIDHYAQDPHSGTSNLRAYQVKIYKATPENSPFNNPVPCDSTGTPIIHTSDDPRLKEWLPTYEGRE.

The segment at residues 1–34 (MGNLTMSRRTFVKTAAITGAAAAAFGASTHTALA) is a signal peptide (tat-type signal). A 4Fe-4S Mo/W bis-MGD-type domain is found at 45–103 (DTVAVKTCCRGCGKMECGVKVIVQNGRAIRVEGDEGAFQSMGNCCTKSQSSIQAAYHPD). Positions 53, 56, 61, and 89 each coordinate [4Fe-4S] cluster. Lys91 (electron donor/acceptor) is an active-site residue.

This sequence belongs to the prokaryotic molybdopterin-containing oxidoreductase family. It depends on [4Fe-4S] cluster as a cofactor. The cofactor is Mo-bis(molybdopterin guanine dinucleotide). In terms of processing, predicted to be exported by the Tat system. The position of the signal peptide cleavage has not been experimentally proven.

This is an uncharacterized protein from Eggerthella lenta (strain ATCC 25559 / DSM 2243 / CCUG 17323 / JCM 9979 / KCTC 3265 / NCTC 11813 / VPI 0255 / 1899 B) (Eubacterium lentum).